A 493-amino-acid polypeptide reads, in one-letter code: 3-octaprenyl-4-hydroxybenzoate carboxy-lyase (493 aa).

Asparagine 172 contacts Mn(2+). Prenylated FMN-binding positions include 175–177 (IYR), 189–191 (RWL), and 194–195 (RG). Glutamate 238 is a binding site for Mn(2+). Aspartate 287 serves as the catalytic Proton donor.

Belongs to the UbiD family. In terms of assembly, homohexamer. Prenylated FMN is required as a cofactor. Mn(2+) serves as cofactor.

The protein localises to the cell membrane. The catalysed reaction is a 4-hydroxy-3-(all-trans-polyprenyl)benzoate + H(+) = a 2-(all-trans-polyprenyl)phenol + CO2. The protein operates within cofactor biosynthesis; ubiquinone biosynthesis. In terms of biological role, catalyzes the decarboxylation of 3-octaprenyl-4-hydroxy benzoate to 2-octaprenylphenol, an intermediate step in ubiquinone biosynthesis. This is 3-octaprenyl-4-hydroxybenzoate carboxy-lyase from Shewanella woodyi (strain ATCC 51908 / MS32).